The chain runs to 186 residues: Heat shock protein 23 (186 aa).

Positions valine 53–glutamine 161 constitute a sHSP domain. The disordered stretch occupies residues valine 163–lysine 186. Over residues asparagine 169–lysine 186 the composition is skewed to basic and acidic residues.

It belongs to the small heat shock protein (HSP20) family.

In Drosophila melanogaster (Fruit fly), this protein is Heat shock protein 23 (Hsp23).